Reading from the N-terminus, the 240-residue chain is Proteasome subunit alpha (240 aa).

This sequence belongs to the peptidase T1A family. The 20S proteasome core is composed of 14 alpha and 14 beta subunits that assemble into four stacked heptameric rings, resulting in a barrel-shaped structure. The two inner rings, each composed of seven catalytic beta subunits, are sandwiched by two outer rings, each composed of seven alpha subunits. The catalytic chamber with the active sites is on the inside of the barrel. Has a gated structure, the ends of the cylinder being occluded by the N-termini of the alpha-subunits. Is capped at one or both ends by the proteasome regulatory ATPase, PAN.

Its subcellular location is the cytoplasm. Its activity is regulated as follows. The formation of the proteasomal ATPase PAN-20S proteasome complex, via the docking of the C-termini of PAN into the intersubunit pockets in the alpha-rings, triggers opening of the gate for substrate entry. Interconversion between the open-gate and close-gate conformations leads to a dynamic regulation of the 20S proteasome proteolysis activity. In terms of biological role, component of the proteasome core, a large protease complex with broad specificity involved in protein degradation. This chain is Proteasome subunit alpha, found in Methanoculleus marisnigri (strain ATCC 35101 / DSM 1498 / JR1).